The primary structure comprises 136 residues: Replication enhancer (136 aa).

Belongs to the geminiviridae replication enhancer protein family. In terms of assembly, homooligomer. Interacts with the replication-associated protein (REP). Interacts with host proliferating cell nuclear antigen (PCNA). Interacts with host retinoblastoma-related protein 1 (RBR1), and may thereby deregulate the host cell cycle. Oligomerization and interaction with PCNA are necessary for optimal replication enhancement.

In terms of biological role, increases viral DNA accumulation. Enhances infectivity and symptom expression. In Beet curly top virus (strain California/Logan) (BCTV), this protein is Replication enhancer.